The primary structure comprises 677 residues: MLYLVATGDYKGPSENHLSFTKGQRIEFLERTENGFIKGKLDGKVGIFPSSLITIETRPLSIIQNQPIKYSTETKDDTGSISSSTSTSTSSLTTPRAESSKDASGEQQPSTSTINGQSSSTSPILQSNGTTNTTTSSTSNNNIGDNISEKSFGDYDDTTSNHSKSASRLSVASFSTTTTATTTTTTTTTATSSKDKDKKDKKEKKEKKDKKSKDDDKSEKEGLYRKSKGSSSSSSSSSSSTKRRYANRKACEPWVVKKYEDIPEEVKSDMLKEDIPIKDIQDHFKLFLRILKFITRQKITLLIPIDPTIPTKEMNLLDLSDAESVAKSTTMFTREEIRTSAFDNVDAFVDAPIMDDNEKAAKTTEIKLERKRILTGISTEFLGQASTTIRVIPSSDIKKRIKFTHMVGRGQYGKVYDALYDKKRVCVKVVNYSTPKEQHNVLQEIGFLTQCDHPNILKYNCSVLYGSDLFIVSEFIQGGTLEQASASSHVFKETQVGFIGLELLKAISYLHEKKLIHRDIKAANVMVSTDGEVKLIDFGLCASVEKGGSQHMVGSPYYMSPEMIRGEECSYPSDIWSFGICILELLFKKPPHRDSRMKAMFYNAINGIDFPKIRCSIDLKDMLWQCFESNPEKRSTVDKLMRHPFFKRCESKSQMKSVFTDMFSTSSKNSISTTGFF.

In terms of domain architecture, SH3 spans 1–58; it reads MLYLVATGDYKGPSENHLSFTKGQRIEFLERTENGFIKGKLDGKVGIFPSSLITIETR. Residues 72–244 are disordered; it reads TETKDDTGSI…SSSSSSTKRR (173 aa). Residues 79-94 are compositionally biased toward low complexity; that stretch reads GSISSSTSTSTSSLTT. A compositionally biased stretch (polar residues) spans 105–126; that stretch reads GEQQPSTSTINGQSSSTSPILQ. Positions 127 to 146 are enriched in low complexity; that stretch reads SNGTTNTTTSSTSNNNIGDN. Polar residues predominate over residues 158-174; the sequence is TTSNHSKSASRLSVASF. Low complexity predominate over residues 175–192; that stretch reads STTTTATTTTTTTTTATS. A compositionally biased stretch (basic and acidic residues) spans 209-224; the sequence is DKKSKDDDKSEKEGLY. Positions 230–240 are enriched in low complexity; sequence SSSSSSSSSSS. The region spanning 401–646 is the Protein kinase domain; that stretch reads IKFTHMVGRG…VDKLMRHPFF (246 aa). ATP is bound by residues 407-415 and Lys428; that span reads VGRGQYGKV. The active-site Proton acceptor is Asp519.

The protein belongs to the protein kinase superfamily. Ser/Thr protein kinase family. STE20 subfamily. The cofactor is Mg(2+).

It carries out the reaction L-seryl-[protein] + ATP = O-phospho-L-seryl-[protein] + ADP + H(+). It catalyses the reaction L-threonyl-[protein] + ATP = O-phospho-L-threonyl-[protein] + ADP + H(+). The protein is Probable serine/threonine-protein kinase mkcF of Dictyostelium discoideum (Social amoeba).